A 472-amino-acid chain; its full sequence is Nucleoporin NUP49/NSP49 (472 aa).

The FG 1 repeat unit spans residues 2–3 (FG). Residues 14–17 (GLFG) form a GLFG 1 repeat. Residues 28–104 (NTGFSFGGTQ…TANTGGGLFG (77 aa)) are disordered. An FG 2 repeat occupies 33 to 34 (FG). Residues 48–51 (GLFG) form a GLFG 2 repeat. Positions 64 to 80 (SFGQQQQQSQTNAFGGS) are enriched in low complexity. 2 FG repeats span residues 65–66 (FG) and 77–78 (FG). GLFG repeat units follow at residues 86-89 (GLFG) and 101-104 (GLFG). The stretch at 113–116 (SLFG) is one SLFG 1 repeat. 2 GLFG repeats span residues 125–128 (GLFG) and 148–151 (GLFG). One copy of the SLFG 2 repeat lies at 159 to 162 (SLFG). The GLFG 7; approximate repeat unit spans residues 175–178 (GMFG). The stretch at 185–188 (SLFG) is one SLFG 3 repeat. Residues 199–202 (GLFG) form a GLFG 8 repeat. One copy of the SLFG 4 repeat lies at 210 to 213 (SLFG). A disordered region spans residues 211–242 (LFGSSNNNNNNNNSNNIMSASGGLFGNQQQQL). Residues 214–226 (SSNNNNNNNNSNN) show a composition bias toward low complexity. The GLFG 9 repeat unit spans residues 233-236 (GLFG).

This sequence belongs to the nucleoporin GLFG family. In terms of assembly, component of the nuclear pore complex (NPC). NPC constitutes the exclusive means of nucleocytoplasmic transport. NPCs allow the passive diffusion of ions and small molecules and the active, nuclear transport receptor-mediated bidirectional transport of macromolecules such as proteins, RNAs, ribonucleoparticles (RNPs), and ribosomal subunits across the nuclear envelope. Due to its 8-fold rotational symmetry, all subunits are present with 8 copies or multiples thereof. NUP49 is part of the NUP57 subcomplex (NIC96, NSP1, NUP49, NUP57) interacting with NUP57. Interacts through its FG repeats with karyopherins.

The protein resides in the nucleus. Its subcellular location is the nuclear pore complex. It localises to the nucleus membrane. In terms of biological role, functions as a component of the nuclear pore complex (NPC). NPC components, collectively referred to as nucleoporins (NUPs), can play the role of both NPC structural components and of docking or interaction partners for transiently associated nuclear transport factors. Active directional transport is assured by both, a Phe-Gly (FG) repeat affinity gradient for these transport factors across the NPC and a transport cofactor concentration gradient across the nuclear envelope (GSP1 and GSP2 GTPases associated predominantly with GTP in the nucleus, with GDP in the cytoplasm). NUP49 plays an important role in several nuclear transport pathways including poly(A)+ RNA, tRNA, and pre-ribosome transport. In Saccharomyces cerevisiae (strain ATCC 204508 / S288c) (Baker's yeast), this protein is Nucleoporin NUP49/NSP49 (NUP49).